Here is a 172-residue protein sequence, read N- to C-terminus: Outer-membrane lipoprotein carrier protein (172 aa).

The signal sequence occupies residues 1 to 16; that stretch reads MRIALLWVAFGALALA.

Belongs to the LolA family. Monomer.

It is found in the periplasm. Its function is as follows. Participates in the translocation of lipoproteins from the inner membrane to the outer membrane. Only forms a complex with a lipoprotein if the residue after the N-terminal Cys is not an aspartate (The Asp acts as a targeting signal to indicate that the lipoprotein should stay in the inner membrane). The chain is Outer-membrane lipoprotein carrier protein from Wolinella succinogenes (strain ATCC 29543 / DSM 1740 / CCUG 13145 / JCM 31913 / LMG 7466 / NCTC 11488 / FDC 602W) (Vibrio succinogenes).